Reading from the N-terminus, the 36-residue chain is Phospholipase A2 hemilipin-2 (36 aa).

This sequence belongs to the phospholipase A2 family. Group III subfamily. Heterodimer composed of a small subunit and a large subunit; disulfid-linked. Ca(2+) serves as cofactor. Expressed by the venom gland.

It localises to the secreted. The enzyme catalyses a 1,2-diacyl-sn-glycero-3-phosphocholine + H2O = a 1-acyl-sn-glycero-3-phosphocholine + a fatty acid + H(+). In terms of biological role, scorpion venom phospholipase A2 (PLA2) that impacts angiogenesis in vitro and in vivo without showing any cytotoxic or apoptotic signs. The antiangiogenic effect is independent from the catalytic activity and seems to be held by its small subunit. PLA2 catalyzes the calcium-dependent hydrolysis of the 2-acyl groups in 3-sn-phosphoglycerides. In Hemiscorpius lepturus (Scorpion), this protein is Phospholipase A2 hemilipin-2.